Reading from the N-terminus, the 576-residue chain is CDPK-related kinase 1 (576 aa).

The disordered stretch occupies residues 1–39; sequence MGICHGKPVEQQSKSLPVSGETNEAPTNSQPPAKSSGFP. A lipid anchor (N-myristoyl glycine) is attached at Gly2. The segment covering 10 to 33 has biased composition (polar residues); it reads EQQSKSLPVSGETNEAPTNSQPPA. Positions 123–385 constitute a Protein kinase domain; the sequence is YEIDGEVGRG…AAQALCHPWL (263 aa). ATP contacts are provided by residues 129-137 and Lys155; that span reads VGRGHFGYT. Asp251 (proton acceptor) is an active-site residue. At Ser291 the chain carries Phosphoserine. Ser333 carries the post-translational modification Phosphoserine; by CPK1 and CPK34. Residues 390 to 420 are autoinhibitory domain; the sequence is ELKIPSDMIIYKLVKVYIMSTSLRKSALAAL. Positions 409 to 429 are calmodulin binding (CaMBD); sequence STSLRKSALAALAKTLTVPQL. EF-hand domains lie at 427–463, 464–499, 500–539, and 542–571; these read PQLA…STDA, MKDS…VYQL, EAME…GPSV, and HVVL…VSSR. 10 residues coordinate Ca(2+): Ser442, Asn444, Tyr446, Lys483, Glu488, Asp519, Asn521, Glu528, Asp553, and Lys555. Ser557 carries the post-translational modification Phosphoserine.

It belongs to the protein kinase superfamily. Ser/Thr protein kinase family. CDPK subfamily. As to quaternary structure, binds calmodulin (CaM) in a calcium-dependent manner. Interacts with HSFA1A. Post-translationally, autophosphorylated.

The protein localises to the membrane. It carries out the reaction L-seryl-[protein] + ATP = O-phospho-L-seryl-[protein] + ADP + H(+). The enzyme catalyses L-threonyl-[protein] + ATP = O-phospho-L-threonyl-[protein] + ADP + H(+). With respect to regulation, activated by calcium and calmodulin. Autophosphorylation may play an important role in the regulation of the kinase activity. In terms of biological role, may play a role in signal transduction pathways that involve calcium as a second messenger. Serine/threonine kinase that phosphorylates histone H3. Confers thermotolerance; involved in the heat-shock-mediated calmodulin-dependent signal transduction leading to the activation of heat-shock transcription factors (HSFs); phosphorylates HSFA1A. This is CDPK-related kinase 1 (CRK1) from Arabidopsis thaliana (Mouse-ear cress).